The following is a 319-amino-acid chain: Putative peptide biosynthesis protein YydG (319 aa).

The region spanning 1–214 is the Radical SAM core domain; sequence MYNKTVSINL…HCPGYDIVYH (214 aa). [4Fe-4S] cluster-binding residues include cysteine 14, cysteine 18, and cysteine 21.

It depends on [4Fe-4S] cluster as a cofactor.

Required for production of the modified peptide YydF. May activate a metalloenzyme (Potential). The polypeptide is Putative peptide biosynthesis protein YydG (yydG) (Bacillus subtilis (strain 168)).